The following is a 204-amino-acid chain: Holliday junction branch migration complex subunit RuvA (204 aa).

The domain I stretch occupies residues M1–G67. The segment at S68–D146 is domain II. A flexible linker region spans residues R147–A156. The domain III stretch occupies residues A156–P204.

Belongs to the RuvA family. In terms of assembly, homotetramer. Forms an RuvA(8)-RuvB(12)-Holliday junction (HJ) complex. HJ DNA is sandwiched between 2 RuvA tetramers; dsDNA enters through RuvA and exits via RuvB. An RuvB hexamer assembles on each DNA strand where it exits the tetramer. Each RuvB hexamer is contacted by two RuvA subunits (via domain III) on 2 adjacent RuvB subunits; this complex drives branch migration. In the full resolvosome a probable DNA-RuvA(4)-RuvB(12)-RuvC(2) complex forms which resolves the HJ.

It is found in the cytoplasm. Its function is as follows. The RuvA-RuvB-RuvC complex processes Holliday junction (HJ) DNA during genetic recombination and DNA repair, while the RuvA-RuvB complex plays an important role in the rescue of blocked DNA replication forks via replication fork reversal (RFR). RuvA specifically binds to HJ cruciform DNA, conferring on it an open structure. The RuvB hexamer acts as an ATP-dependent pump, pulling dsDNA into and through the RuvAB complex. HJ branch migration allows RuvC to scan DNA until it finds its consensus sequence, where it cleaves and resolves the cruciform DNA. The polypeptide is Holliday junction branch migration complex subunit RuvA (Synechococcus sp. (strain JA-3-3Ab) (Cyanobacteria bacterium Yellowstone A-Prime)).